The sequence spans 370 residues: Cobalt-precorrin-5B C(1)-methyltransferase (370 aa).

It belongs to the CbiD family.

The catalysed reaction is Co-precorrin-5B + S-adenosyl-L-methionine = Co-precorrin-6A + S-adenosyl-L-homocysteine. It functions in the pathway cofactor biosynthesis; adenosylcobalamin biosynthesis; cob(II)yrinate a,c-diamide from sirohydrochlorin (anaerobic route): step 6/10. In terms of biological role, catalyzes the methylation of C-1 in cobalt-precorrin-5B to form cobalt-precorrin-6A. This Prochlorococcus marinus (strain MIT 9312) protein is Cobalt-precorrin-5B C(1)-methyltransferase.